A 554-amino-acid polypeptide reads, in one-letter code: MALSIMSSYASFRPFKPSSSLSSSQNIIRNFDENSKYHIRSNGDLTPQKDLDKYRDVLRKADPFDEGLKMIDAIQRLGIDYIFEEEIDKIIQSQSAYKFFREFEHDHHHHQDLYDVALRFRLLRQHGLFVPADIFNKYKDNNKGCFDTRLREDIKGLLSLYEASHLCIEGENILDEAALFSAQHLEASMTRLHRYDQYQAKFVATTLQNPTHKSLSKFTAKDLFGVYPSENGYINLFQQLAKVEFNRVQSLHRMEIDKVTRWWRDIGLAKELTFARDQPVKWYIWSMACLTDPILSKQRVALTKSISFIYVIDDIFDMYSSLDELILFTQAVSSWEYSAIQKLPDSMKTCFRALDNMINESSHTIYQKRGWSPLHSLRKTWASLCEAFLVEAKWFASRHVPKAKEYLENGVVSSGVHVVLVHIFVLLDETSLTQKTLDFVENMPSIITSTASILRLWDDFGSAKDENQEGHDGSYVECYMKELGGSVEDAREEMMEKISDAWKCLNKECILRNPAFPPPFLKASLNLARLVPLMYNYDHNQRLPHLEEHIKSLL.

Residues Arg-276, Asp-313, Asp-317, Arg-455, and Asp-458 each coordinate (2E,6E)-farnesyl diphosphate. Mg(2+) contacts are provided by Asp-313 and Asp-317. Residues 313-317 (DDIFD) carry the DDXXD motif motif. The Mg(2+) site is built by Asp-458, Ser-462, and Glu-466.

Belongs to the terpene synthase family. Tpsb subfamily. It depends on Mg(2+) as a cofactor. Mn(2+) serves as cofactor. Highly expressed in glandular trichomes.

It catalyses the reaction (2E,6E)-farnesyl diphosphate + H2O = (6E)-nerolidol + diphosphate. The enzyme catalyses (2E)-geranyl diphosphate + H2O = (S)-linalool + diphosphate. Its pathway is secondary metabolite biosynthesis; terpenoid biosynthesis. Its function is as follows. Involved in sesquiterpene olefins biosynthesis, constituants of cannabinoids and terpenoids-rich resins. Catalyzes primarily the conversion of (2E)-farnesyl diphosphate to (E)-nerolidol, and the conversion of (2E)-geranyl diphosphate to (+)linalool. The chain is (E)-nerolidol synthase TPS18VF from Cannabis sativa (Hemp).